The primary structure comprises 621 residues: Alpha-actinin-like protein 1 (621 aa).

Calponin-homology (CH) domains lie at Ser-8–Thr-114 and Leu-123–Ser-230. The interval Leu-86–Ile-110 is actin-binding. EF-hand domains are found at residues Leu-388–Leu-419, Asp-487–Met-549, and Glu-550–Lys-618.

It belongs to the alpha-actinin family.

The protein localises to the cytoplasm. It is found in the cytoskeleton. Binds to actin and is involved in actin-ring formation and organization. Plays a role in cytokinesis and is involved in septation. The sequence is that of Alpha-actinin-like protein 1 (ain1) from Schizosaccharomyces pombe (strain 972 / ATCC 24843) (Fission yeast).